Reading from the N-terminus, the 248-residue chain is Triosephosphate isomerase B (248 aa).

Asn11 and Lys13 together coordinate substrate. The active-site Electrophile is His95. Glu165 functions as the Proton acceptor in the catalytic mechanism.

It belongs to the triosephosphate isomerase family. As to quaternary structure, homodimer.

The protein resides in the cytoplasm. It catalyses the reaction dihydroxyacetone phosphate = methylglyoxal + phosphate. The catalysed reaction is D-glyceraldehyde 3-phosphate = dihydroxyacetone phosphate. It functions in the pathway carbohydrate degradation; glycolysis; D-glyceraldehyde 3-phosphate from glycerone phosphate: step 1/1. It participates in carbohydrate biosynthesis; gluconeogenesis. Triosephosphate isomerase is an extremely efficient metabolic enzyme that catalyzes the interconversion between dihydroxyacetone phosphate (DHAP) and D-glyceraldehyde-3-phosphate (G3P) in glycolysis and gluconeogenesis. In terms of biological role, it is also responsible for the non-negligible production of methylglyoxal a reactive cytotoxic side-product that modifies and can alter proteins, DNA and lipids. The chain is Triosephosphate isomerase B (tpi1b) from Danio rerio (Zebrafish).